The chain runs to 365 residues: Chorismate synthase (365 aa).

Residue Arg48 participates in NADP(+) binding. Residues 125-127, 238-239, Gly278, 293-297, and Arg319 each bind FMN; these read RSS, NA, and KPTSS.

Belongs to the chorismate synthase family. As to quaternary structure, homotetramer. FMNH2 is required as a cofactor.

The enzyme catalyses 5-O-(1-carboxyvinyl)-3-phosphoshikimate = chorismate + phosphate. It functions in the pathway metabolic intermediate biosynthesis; chorismate biosynthesis; chorismate from D-erythrose 4-phosphate and phosphoenolpyruvate: step 7/7. Its function is as follows. Catalyzes the anti-1,4-elimination of the C-3 phosphate and the C-6 proR hydrogen from 5-enolpyruvylshikimate-3-phosphate (EPSP) to yield chorismate, which is the branch point compound that serves as the starting substrate for the three terminal pathways of aromatic amino acid biosynthesis. This reaction introduces a second double bond into the aromatic ring system. This is Chorismate synthase from Marinomonas sp. (strain MWYL1).